Here is a 410-residue protein sequence, read N- to C-terminus: Shaggy-related protein kinase epsilon (410 aa).

Residue Ala-2 is modified to N-acetylalanine. In terms of domain architecture, Protein kinase spans 74–358 (YMAERIVGQG…AMEAIVHPFF (285 aa)). Residues 80 to 88 (VGQGSFGIV) and Lys-103 each bind ATP. Residue Asp-199 is the Proton acceptor of the active site. Phosphotyrosine is present on Tyr-234.

It belongs to the protein kinase superfamily. CMGC Ser/Thr protein kinase family. GSK-3 subfamily. In terms of assembly, binds to KIB1. Autophosphorylated mainly on threonine and serine residues.

It catalyses the reaction L-seryl-[protein] + ATP = O-phospho-L-seryl-[protein] + ADP + H(+). It carries out the reaction L-threonyl-[protein] + ATP = O-phospho-L-threonyl-[protein] + ADP + H(+). Its function is as follows. May mediate extracellular signals to regulate transcription in differentiating cells. The chain is Shaggy-related protein kinase epsilon (ASK5) from Arabidopsis thaliana (Mouse-ear cress).